The chain runs to 452 residues: Adenylosuccinate synthetase (452 aa).

GTP-binding positions include 40-46 (GDEGKGK) and 68-70 (GHT). Residue aspartate 41 is the Proton acceptor of the active site. 2 residues coordinate Mg(2+): aspartate 41 and glycine 68. IMP is bound by residues 41 to 44 (DEGK), 66 to 69 (NAGH), threonine 158, arginine 172, asparagine 250, threonine 265, and arginine 329. The active-site Proton donor is the histidine 69. 325-331 (VTTKRKR) provides a ligand contact to substrate. Residues arginine 331, 357–359 (KLD), and 440–442 (GVG) each bind GTP.

Belongs to the adenylosuccinate synthetase family. Homodimer. The cofactor is Mg(2+).

It is found in the cytoplasm. It carries out the reaction IMP + L-aspartate + GTP = N(6)-(1,2-dicarboxyethyl)-AMP + GDP + phosphate + 2 H(+). It participates in purine metabolism; AMP biosynthesis via de novo pathway; AMP from IMP: step 1/2. In terms of biological role, plays an important role in the de novo pathway and in the salvage pathway of purine nucleotide biosynthesis. Catalyzes the first committed step in the biosynthesis of AMP from IMP. The polypeptide is Adenylosuccinate synthetase (Drosophila grimshawi (Hawaiian fruit fly)).